The sequence spans 244 residues: ATP synthase subunit b 2 (244 aa).

The chain crosses the membrane as a helical span at residues 2–22 (TVDWWTIGLQVINVSVLIWLL).

The protein belongs to the ATPase B chain family. As to quaternary structure, F-type ATPases have 2 components, F(1) - the catalytic core - and F(0) - the membrane proton channel. F(1) has five subunits: alpha(3), beta(3), gamma(1), delta(1), epsilon(1). F(0) has three main subunits: a(1), b(2) and c(10-14). The alpha and beta chains form an alternating ring which encloses part of the gamma chain. F(1) is attached to F(0) by a central stalk formed by the gamma and epsilon chains, while a peripheral stalk is formed by the delta and b chains.

It localises to the cell inner membrane. Functionally, f(1)F(0) ATP synthase produces ATP from ADP in the presence of a proton or sodium gradient. F-type ATPases consist of two structural domains, F(1) containing the extramembraneous catalytic core and F(0) containing the membrane proton channel, linked together by a central stalk and a peripheral stalk. During catalysis, ATP synthesis in the catalytic domain of F(1) is coupled via a rotary mechanism of the central stalk subunits to proton translocation. In terms of biological role, component of the F(0) channel, it forms part of the peripheral stalk, linking F(1) to F(0). The protein is ATP synthase subunit b 2 of Gluconobacter oxydans (strain 621H) (Gluconobacter suboxydans).